Here is a 130-residue protein sequence, read N- to C-terminus: Hypocretin neuropeptide precursor (130 aa).

An N-terminal signal peptide occupies residues methionine 1 to alanine 32. The residue at position 33 (glutamine 33) is a Pyrrolidone carboxylic acid. Intrachain disulfides connect cysteine 38–cysteine 44 and cysteine 39–cysteine 46. Leucine 65 carries the post-translational modification Leucine amide. Position 96 is a methionine amide (methionine 96). The propeptide at glycine 97 to valine 130 is removed in mature form.

This sequence belongs to the orexin family. In terms of processing, specific enzymatic cleavages at paired basic residues yield the different active peptides.

The protein resides in the rough endoplasmic reticulum. The protein localises to the cytoplasmic vesicle. It is found in the synapse. In terms of biological role, neuropeptides that play a significant role in the regulation of food intake and sleep-wakefulness, possibly by coordinating the complex behavioral and physiologic responses of these complementary homeostatic functions. A broader role in the homeostatic regulation of energy metabolism, autonomic function, hormonal balance and the regulation of body fluids, is also suggested. Binds to orexin receptors HCRTR1/OX1R and HCRTR2/OX2R with a high affinity. Stimulates food intake. Modulates pituitary luteinizing hormone secretion in an ovarian steroid-dependent manner. Functionally, binds to orexin receptor HCRTR2/OX2R only. Stimulates food intake. Modulates pituitary luteinizing hormone secretion in an ovarian steroid-dependent manner. This Canis lupus familiaris (Dog) protein is Hypocretin neuropeptide precursor (HCRT).